We begin with the raw amino-acid sequence, 186 residues long: dTTP/UTP pyrophosphatase (186 aa).

Asp66 serves as the catalytic Proton acceptor.

It belongs to the Maf family. YhdE subfamily. It depends on a divalent metal cation as a cofactor.

It localises to the cytoplasm. It catalyses the reaction dTTP + H2O = dTMP + diphosphate + H(+). It carries out the reaction UTP + H2O = UMP + diphosphate + H(+). In terms of biological role, nucleoside triphosphate pyrophosphatase that hydrolyzes dTTP and UTP. May have a dual role in cell division arrest and in preventing the incorporation of modified nucleotides into cellular nucleic acids. This Pyrococcus horikoshii (strain ATCC 700860 / DSM 12428 / JCM 9974 / NBRC 100139 / OT-3) protein is dTTP/UTP pyrophosphatase.